The following is a 633-amino-acid chain: Chaperone protein dnaK2 (633 aa).

T196 carries the post-translational modification Phosphothreonine; by autocatalysis. The disordered stretch occupies residues 600–633; that stretch reads ATADGGPAQHAATGGPTSGGGGGDDVIDAEFDKG. A compositionally biased stretch (acidic residues) spans 624–633; the sequence is DVIDAEFDKG.

Belongs to the heat shock protein 70 family.

Functionally, acts as a chaperone. In Streptomyces avermitilis (strain ATCC 31267 / DSM 46492 / JCM 5070 / NBRC 14893 / NCIMB 12804 / NRRL 8165 / MA-4680), this protein is Chaperone protein dnaK2 (dnaK2).